Consider the following 185-residue polypeptide: Putative F-box protein At3g17400 (185 aa).

Residues 1 to 47 form the F-box domain; it reads MMTLSDLPSDLAEEVLSKIPVTSLRGVRATCKKWNTLSKDRSFTRKH.

This Arabidopsis thaliana (Mouse-ear cress) protein is Putative F-box protein At3g17400.